The following is a 1379-amino-acid chain: Vascular endothelial growth factor receptor 3 (1379 aa).

Residues 1-19 form the signal peptide; that stretch reads MKRVCTLPLWLWLGIVSEA. Residues 20-788 lie on the Extracellular side of the membrane; it reads DLVSSYSMTP…EGSDDKTNVE (769 aa). Ig-like C2-type domains are found at residues 30–136, 160–222, 240–335, 340–421, 430–566, 569–684, and 691–777; these read PTLS…TAVS, KENT…IDNK, DIQL…TDVI, PFIN…KRIS, PRIH…FYVT, PDGF…KYIS, and PRLK…ASVS. Disulfide bonds link cysteine 51–cysteine 120 and cysteine 167–cysteine 215. The tract at residues 73–93 is disordered; sequence RRWNSQPQQRPVGAGNPEEDC. 4 N-linked (GlcNAc...) asparagine glycosylation sites follow: asparagine 113, asparagine 175, asparagine 260, and asparagine 308. The cysteines at positions 261 and 319 are disulfide-linked. Intrachain disulfides connect cysteine 453-cysteine 548, cysteine 474-cysteine 500, and cysteine 592-cysteine 666. 7 N-linked (GlcNAc...) asparagine glycosylation sites follow: asparagine 529, asparagine 541, asparagine 596, asparagine 608, asparagine 655, asparagine 696, and asparagine 703. Cysteine 712 and cysteine 761 are oxidised to a cystine. Asparagine 771 is a glycosylation site (N-linked (GlcNAc...) asparagine). The chain crosses the membrane as a helical span at residues 789–809; that stretch reads IVILIGTGVIAVFFWILLIII. The Cytoplasmic segment spans residues 810–1379; the sequence is FCNIKRPAHA…LHASFFSEQY (570 aa). The 328-residue stretch at 858 to 1185 folds into the Protein kinase domain; sequence LRLGKVLGHG…DLVEILGNLL (328 aa). Residues 864–872 and lysine 892 each bind ATP; that span reads LGHGAFGKV. Aspartate 1049 serves as the catalytic Proton acceptor. Phosphotyrosine; by autocatalysis occurs at positions 1075 and 1080. The segment at 1196–1224 is disordered; it reads YIPLNDSHSSEDDGFSQVPSSAQQNSDEE. Residues tyrosine 1239, tyrosine 1240, tyrosine 1274, tyrosine 1342, and tyrosine 1346 each carry the phosphotyrosine; by autocatalysis modification. Residues 1299–1379 are disordered; that stretch reads RHRKEGGFSS…LHASFFSEQY (81 aa). Over residues 1332 to 1343 the composition is skewed to polar residues; that stretch reads YGSQVGGQTFYN.

Belongs to the protein kinase superfamily. Tyr protein kinase family. CSF-1/PDGF receptor subfamily. Interacts with VEGFC and VEGFD. Monomer in the absence of bound VEGFC or VEGFD. Homodimer in the presence of bound VEGFC or VEGFD. In terms of processing, autophosphorylated on tyrosine residues upon ligand binding. Autophosphorylation occurs in trans, i.e. one subunit of the dimeric receptor phosphorylates tyrosine residues on the other subunit.

Its subcellular location is the cell membrane. It is found in the cytoplasm. It localises to the nucleus. The enzyme catalyses L-tyrosyl-[protein] + ATP = O-phospho-L-tyrosyl-[protein] + ADP + H(+). Its activity is regulated as follows. Present in an inactive conformation in the absence of bound ligand. Binding of VEGFC or VEGFD leads to dimerization and activation by autophosphorylation on tyrosine residues. Its function is as follows. Tyrosine-protein kinase that acts as a cell-surface receptor for VEGFC and VEGFD, and plays an essential role in lymphangiogenesis and in the development of the vascular network and the cardiovascular system during embryonic development. Promotes proliferation, survival and migration of endothelial cells, and regulates angiogenic sprouting. Mediates activation of the MAPK1/ERK2, MAPK3/ERK1 signaling pathway, of MAPK8 and the JUN signaling pathway, and of the AKT1 signaling pathway. The sequence is that of Vascular endothelial growth factor receptor 3 (FLT4) from Coturnix coturnix (Common quail).